A 400-amino-acid chain; its full sequence is Glutamyl-tRNA reductase (400 aa).

Residues 45-48, serine 103, 108-110, and glutamine 114 each bind substrate; these read TCNR and EDQ. Cysteine 46 functions as the Nucleophile in the catalytic mechanism. 179 to 184 serves as a coordination point for NADP(+); the sequence is GYGEIG.

It belongs to the glutamyl-tRNA reductase family. Homodimer.

The enzyme catalyses (S)-4-amino-5-oxopentanoate + tRNA(Glu) + NADP(+) = L-glutamyl-tRNA(Glu) + NADPH + H(+). It functions in the pathway porphyrin-containing compound metabolism; protoporphyrin-IX biosynthesis; 5-aminolevulinate from L-glutamyl-tRNA(Glu): step 1/2. Catalyzes the NADPH-dependent reduction of glutamyl-tRNA(Glu) to glutamate 1-semialdehyde (GSA). The chain is Glutamyl-tRNA reductase from Clostridium perfringens (strain SM101 / Type A).